The sequence spans 225 residues: NAD(P)H-quinone oxidoreductase subunit K, chloroplastic (225 aa).

Positions 43, 44, 108, and 139 each coordinate [4Fe-4S] cluster.

It belongs to the complex I 20 kDa subunit family. NDH is composed of at least 16 different subunits, 5 of which are encoded in the nucleus. Requires [4Fe-4S] cluster as cofactor.

It localises to the plastid. The protein localises to the chloroplast thylakoid membrane. The enzyme catalyses a plastoquinone + NADH + (n+1) H(+)(in) = a plastoquinol + NAD(+) + n H(+)(out). The catalysed reaction is a plastoquinone + NADPH + (n+1) H(+)(in) = a plastoquinol + NADP(+) + n H(+)(out). In terms of biological role, NDH shuttles electrons from NAD(P)H:plastoquinone, via FMN and iron-sulfur (Fe-S) centers, to quinones in the photosynthetic chain and possibly in a chloroplast respiratory chain. The immediate electron acceptor for the enzyme in this species is believed to be plastoquinone. Couples the redox reaction to proton translocation, and thus conserves the redox energy in a proton gradient. This Nicotiana tabacum (Common tobacco) protein is NAD(P)H-quinone oxidoreductase subunit K, chloroplastic.